A 733-amino-acid polypeptide reads, in one-letter code: Cell division cycle protein 48 homolog AF_1297 (733 aa).

Residues 223–230 (GPPGTGKT) and 496–503 (GPPGTGKT) each bind ATP.

Belongs to the AAA ATPase family. CDC48 subfamily.

The sequence is that of Cell division cycle protein 48 homolog AF_1297 from Archaeoglobus fulgidus (strain ATCC 49558 / DSM 4304 / JCM 9628 / NBRC 100126 / VC-16).